Reading from the N-terminus, the 64-residue chain is Large ribosomal subunit protein bL33c (64 aa).

It belongs to the bacterial ribosomal protein bL33 family.

It localises to the plastid. It is found in the chloroplast. This chain is Large ribosomal subunit protein bL33c, found in Phaeodactylum tricornutum (strain CCAP 1055/1).